The chain runs to 257 residues: Beta-fibrinogenase mucrofibrase-5 (257 aa).

The first 18 residues, 1-18 (MVLIRVLANLLILQLSYA), serve as a signal peptide directing secretion. Residues 19-24 (QKSSEL) constitute a propeptide that is removed on maturation. The region spanning 25–248 (IIGGDECNIN…HLDWIKGIIA (224 aa)) is the Peptidase S1 domain. Disulfide bonds link cysteine 31–cysteine 162, cysteine 49–cysteine 65, cysteine 97–cysteine 255, cysteine 141–cysteine 209, cysteine 173–cysteine 188, and cysteine 199–cysteine 224. Histidine 64 (charge relay system) is an active-site residue. N-linked (GlcNAc...) asparagine glycosylation is present at asparagine 102. Catalysis depends on aspartate 109, which acts as the Charge relay system. Residue serine 203 is the Charge relay system of the active site.

Belongs to the peptidase S1 family. Snake venom subfamily. In terms of assembly, monomer. Expressed by the venom gland.

The protein localises to the secreted. Snake venom serine protease with strong beta-fibrinogenolytic activities, angiotensin I (AGT)-degrading activities and strong kallikrein-like activities in vitro, releasing bradykinin from kininogen (KNG1). Intravenous injection mildly lowers blood pressure in experimental rats, which may be explained by the action on angiotensin I and kininogen. Exhibits amidase activity against N-benzoyl-Pro-Phe-Arg-p-nitroanilide in vitro. The protein is Beta-fibrinogenase mucrofibrase-5 of Protobothrops mucrosquamatus (Taiwan habu).